Here is a 434-residue protein sequence, read N- to C-terminus: Probable glycine dehydrogenase (decarboxylating) subunit 1 (434 aa).

The protein belongs to the GcvP family. N-terminal subunit subfamily. As to quaternary structure, the glycine cleavage system is composed of four proteins: P, T, L and H. In this organism, the P 'protein' is a heterodimer of two subunits.

It catalyses the reaction N(6)-[(R)-lipoyl]-L-lysyl-[glycine-cleavage complex H protein] + glycine + H(+) = N(6)-[(R)-S(8)-aminomethyldihydrolipoyl]-L-lysyl-[glycine-cleavage complex H protein] + CO2. Its function is as follows. The glycine cleavage system catalyzes the degradation of glycine. The P protein binds the alpha-amino group of glycine through its pyridoxal phosphate cofactor; CO(2) is released and the remaining methylamine moiety is then transferred to the lipoamide cofactor of the H protein. In Thermoplasma volcanium (strain ATCC 51530 / DSM 4299 / JCM 9571 / NBRC 15438 / GSS1), this protein is Probable glycine dehydrogenase (decarboxylating) subunit 1.